Consider the following 83-residue polypeptide: Exodeoxyribonuclease 7 small subunit (83 aa).

The protein belongs to the XseB family. Heterooligomer composed of large and small subunits.

Its subcellular location is the cytoplasm. The catalysed reaction is Exonucleolytic cleavage in either 5'- to 3'- or 3'- to 5'-direction to yield nucleoside 5'-phosphates.. Functionally, bidirectionally degrades single-stranded DNA into large acid-insoluble oligonucleotides, which are then degraded further into small acid-soluble oligonucleotides. This Moorella thermoacetica (strain ATCC 39073 / JCM 9320) protein is Exodeoxyribonuclease 7 small subunit.